Consider the following 356-residue polypeptide: uncharacterized protein (356 aa).

A run of 6 helical transmembrane segments spans residues 7 to 29 (LLSR…VSLY), 49 to 71 (YFLN…ISLI), 91 to 113 (ISPL…TFLL), 270 to 292 (LFYR…YLFF), 299 to 316 (QVIP…LVIL), and 329 to 348 (VLYS…KGVY).

It is found in the cell membrane. This is an uncharacterized protein from Aquifex aeolicus (strain VF5).